We begin with the raw amino-acid sequence, 389 residues long: NADH-quinone oxidoreductase subunit D (389 aa).

The protein belongs to the complex I 49 kDa subunit family. NDH-1 is composed of 14 different subunits. Subunits NuoB, C, D, E, F, and G constitute the peripheral sector of the complex.

The protein localises to the cell inner membrane. It carries out the reaction a quinone + NADH + 5 H(+)(in) = a quinol + NAD(+) + 4 H(+)(out). In terms of biological role, NDH-1 shuttles electrons from NADH, via FMN and iron-sulfur (Fe-S) centers, to quinones in the respiratory chain. The immediate electron acceptor for the enzyme in this species is believed to be ubiquinone. Couples the redox reaction to proton translocation (for every two electrons transferred, four hydrogen ions are translocated across the cytoplasmic membrane), and thus conserves the redox energy in a proton gradient. This chain is NADH-quinone oxidoreductase subunit D, found in Rickettsia typhi (strain ATCC VR-144 / Wilmington).